The chain runs to 760 residues: Penicillin-binding protein 1B (760 aa).

Residues 1 to 8 (MFFNFKKY) are Cytoplasmic-facing. A helical; Signal-anchor for type II membrane protein membrane pass occupies residues 9 to 29 (FLIKVFFFVLILTLCYGLYLY). The Extracellular segment spans residues 30–760 (VKINRFINGK…NFLFWLKNLF (731 aa)). The tract at residues 136-308 (FRLEPKLIAM…SLYSPWTNPN (173 aa)) is transglycosylase. Glutamate 174 (proton donor; for transglycosylase activity) is an active-site residue. Residues 392–684 (EQAVKIEIPI…SSGAMQIYKR (293 aa)) are transpeptidase. Serine 451 (acyl-ester intermediate; for transpeptidase activity) is an active-site residue.

It in the N-terminal section; belongs to the glycosyltransferase 51 family. This sequence in the C-terminal section; belongs to the transpeptidase family.

Its subcellular location is the cell membrane. The catalysed reaction is [GlcNAc-(1-&gt;4)-Mur2Ac(oyl-L-Ala-gamma-D-Glu-L-Lys-D-Ala-D-Ala)](n)-di-trans,octa-cis-undecaprenyl diphosphate + beta-D-GlcNAc-(1-&gt;4)-Mur2Ac(oyl-L-Ala-gamma-D-Glu-L-Lys-D-Ala-D-Ala)-di-trans,octa-cis-undecaprenyl diphosphate = [GlcNAc-(1-&gt;4)-Mur2Ac(oyl-L-Ala-gamma-D-Glu-L-Lys-D-Ala-D-Ala)](n+1)-di-trans,octa-cis-undecaprenyl diphosphate + di-trans,octa-cis-undecaprenyl diphosphate + H(+). It carries out the reaction Preferential cleavage: (Ac)2-L-Lys-D-Ala-|-D-Ala. Also transpeptidation of peptidyl-alanyl moieties that are N-acyl substituents of D-alanine.. It functions in the pathway cell wall biogenesis; peptidoglycan biosynthesis. In terms of biological role, cell wall formation. Synthesis of cross-linked peptidoglycan from the lipid intermediates. The enzyme has a penicillin-insensitive transglycosylase N-terminal domain (formation of linear glycan strands) and a penicillin-sensitive transpeptidase C-terminal domain (cross-linking of the peptide subunits). This is Penicillin-binding protein 1B (mrcB) from Buchnera aphidicola subsp. Acyrthosiphon pisum (strain APS) (Acyrthosiphon pisum symbiotic bacterium).